The chain runs to 456 residues: tRNA modification GTPase MnmE (456 aa).

(6S)-5-formyl-5,6,7,8-tetrahydrofolate contacts are provided by Arg-25, Glu-82, and Lys-121. Positions 217-379 constitute a TrmE-type G domain; that stretch reads GIKVVIIGKP…LLDEIVKIAG (163 aa). K(+) is bound at residue Asn-227. Residues 227–232, 246–252, and 271–274 contribute to the GTP site; these read NAGKSS, TDIAGTT, and DTAG. Ser-231 serves as a coordination point for Mg(2+). The K(+) site is built by Thr-246, Ile-248, and Thr-251. Thr-252 lines the Mg(2+) pocket. Lys-456 serves as a coordination point for (6S)-5-formyl-5,6,7,8-tetrahydrofolate.

This sequence belongs to the TRAFAC class TrmE-Era-EngA-EngB-Septin-like GTPase superfamily. TrmE GTPase family. In terms of assembly, homodimer. Heterotetramer of two MnmE and two MnmG subunits. K(+) serves as cofactor.

The protein localises to the cytoplasm. In terms of biological role, exhibits a very high intrinsic GTPase hydrolysis rate. Involved in the addition of a carboxymethylaminomethyl (cmnm) group at the wobble position (U34) of certain tRNAs, forming tRNA-cmnm(5)s(2)U34. In Endomicrobium trichonymphae, this protein is tRNA modification GTPase MnmE.